A 177-amino-acid polypeptide reads, in one-letter code: Adenine phosphoribosyltransferase (177 aa).

The protein belongs to the purine/pyrimidine phosphoribosyltransferase family. Homodimer.

It localises to the cytoplasm. It catalyses the reaction AMP + diphosphate = 5-phospho-alpha-D-ribose 1-diphosphate + adenine. It functions in the pathway purine metabolism; AMP biosynthesis via salvage pathway; AMP from adenine: step 1/1. Catalyzes a salvage reaction resulting in the formation of AMP, that is energically less costly than de novo synthesis. The polypeptide is Adenine phosphoribosyltransferase (Cutibacterium acnes (strain DSM 16379 / KPA171202) (Propionibacterium acnes)).